Reading from the N-terminus, the 226-residue chain is MNPIVINRLQRKLGYTFNHQELLQQALTHRSASSKHNERLEFLGDSILSYVIANALYHRFPRVDEGDMSRMRATLVRGNTLAELAREFELGECLRLGPGELKSGGFRRESILADTVEALIGGVFLDSDIQTVEKLILNWYQTRLDEISPGDKQKDPKTRLQEYLQGRHLPLPTYLVVQVRGEAHDQEFTIHCQVSGLSEPVVGTGSSRRKAEQAAAEQALKKLELE.

In terms of domain architecture, RNase III spans 6 to 128; the sequence is INRLQRKLGY…LIGGVFLDSD (123 aa). Residue Glu41 coordinates Mg(2+). Asp45 is a catalytic residue. Mg(2+) is bound by residues Asp114 and Glu117. The active site involves Glu117. A DRBM domain is found at 155–225; the sequence is DPKTRLQEYL…AEQALKKLEL (71 aa).

The protein belongs to the ribonuclease III family. In terms of assembly, homodimer. The cofactor is Mg(2+).

The protein resides in the cytoplasm. The enzyme catalyses Endonucleolytic cleavage to 5'-phosphomonoester.. Its function is as follows. Digests double-stranded RNA. Involved in the processing of primary rRNA transcript to yield the immediate precursors to the large and small rRNAs (23S and 16S). Processes some mRNAs, and tRNAs when they are encoded in the rRNA operon. Processes pre-crRNA and tracrRNA of type II CRISPR loci if present in the organism. The sequence is that of Ribonuclease 3 from Escherichia coli O139:H28 (strain E24377A / ETEC).